The primary structure comprises 508 residues: Probable zinc metalloprotease MCYG_04217 (508 aa).

N-linked (GlcNAc...) asparagine glycosylation is present at N111. 3 residues coordinate Zn(2+): H182, D202, and E238. Residue N253 is glycosylated (N-linked (GlcNAc...) asparagine). D265 lines the Zn(2+) pocket. Residues 422–508 (MPRNVRVDTS…ERGVAVLPFP (87 aa)) form the Fibronectin type-III domain. The N-linked (GlcNAc...) asparagine glycan is linked to N435.

It belongs to the peptidase M28 family. M28B subfamily. Zn(2+) serves as cofactor.

It is found in the secreted. This Arthroderma otae (strain ATCC MYA-4605 / CBS 113480) (Microsporum canis) protein is Probable zinc metalloprotease MCYG_04217.